The sequence spans 210 residues: UMP-CMP kinase 3 (210 aa).

An ATP-binding site is contributed by 34 to 39; it reads GSGKGT. Positions 54-83 are NMP; it reads SAGDLLRAEIKSGSENGTMIENMIKEGKIV. Residues R60, 81-83, and 108-111 contribute to the a ribonucleoside 5'-phosphate site; these read KIV and GFPR. N115 provides a ligand contact to CMP. The tract at residues 146-154 is LID; it reads GRNQGRVDD. R147 lines the ATP pocket. R151 and R162 together coordinate a ribonucleoside 5'-phosphate. Position 190 (K190) interacts with ATP.

The protein belongs to the adenylate kinase family. UMP-CMP kinase subfamily. Monomer. Mg(2+) serves as cofactor.

It localises to the cytoplasm. The protein resides in the nucleus. The enzyme catalyses UMP + ATP = UDP + ADP. The catalysed reaction is CMP + ATP = CDP + ADP. It catalyses the reaction dCMP + ATP = dCDP + ADP. Functionally, catalyzes the phosphorylation of pyrimidine nucleoside monophosphates at the expense of ATP. Plays an important role in de novo pyrimidine nucleotide biosynthesis. Has preference for UMP and CMP as phosphate acceptors. This Oryza sativa subsp. japonica (Rice) protein is UMP-CMP kinase 3 (URA6).